The sequence spans 470 residues: Ribulose bisphosphate carboxylase large chain (470 aa).

2 residues coordinate substrate: asparagine 118 and threonine 168. The active-site Proton acceptor is lysine 170. Lysine 172 is a binding site for substrate. Residues lysine 196, aspartate 198, and glutamate 199 each contribute to the Mg(2+) site. Lysine 196 bears the N6-carboxylysine mark. The active-site Proton acceptor is the histidine 289. Substrate is bound by residues arginine 290, histidine 322, and serine 374.

This sequence belongs to the RuBisCO large chain family. Type I subfamily. In terms of assembly, heterohexadecamer of 8 large chains and 8 small chains; disulfide-linked. The disulfide link is formed within the large subunit homodimers. RuBisCO interacts with the C-terminus of CcmM, and can be found in complexes that also include carbonic anhydrase (ccaA). RuBisCO associates with both the internal and shell portion of carboxysomes. Requires Mg(2+) as cofactor. In terms of processing, the disulfide bond which can form in the large chain dimeric partners within the hexadecamer appears to be associated with oxidative stress and protein turnover.

The protein localises to the carboxysome. The enzyme catalyses 2 (2R)-3-phosphoglycerate + 2 H(+) = D-ribulose 1,5-bisphosphate + CO2 + H2O. It carries out the reaction D-ribulose 1,5-bisphosphate + O2 = 2-phosphoglycolate + (2R)-3-phosphoglycerate + 2 H(+). Functionally, ruBisCO catalyzes two reactions: the carboxylation of D-ribulose 1,5-bisphosphate, the primary event in carbon dioxide fixation, as well as the oxidative fragmentation of the pentose substrate in the photorespiration process. Both reactions occur simultaneously and in competition at the same active site. This chain is Ribulose bisphosphate carboxylase large chain, found in Synechocystis sp. (strain ATCC 27184 / PCC 6803 / Kazusa).